The chain runs to 417 residues: MRLILPVGLIATTLAIAPVRFDREKVFRVKPQDEKQADIIKDLAKTNELDFWYPGATHHVAANMMVDFRVSEKESQAIQSALDQNKMHYEILIHDLQEEIEKQFDVKEDIPGRHSYAKYNNWEKIVAWTEKMMDKYPEMVSRIKIGSTVEDNPLYVLKIGEKNERRKAIFTDCGIHAREWVSPAFCQWFVYQATKTYGRNKIMTKLLDRMNFYILPVFNVDGYIWSWTKNRMWRKNRSKNQNSKCIGTDLNRNFNASWNSIPNTNDPCADNYRGSAPESEKETKAVTNFIRSHLNEIKVYITFHSYSQMLLFPYGYTSKLPPNHEDLAKVAKIGTDVLSTRYETRYIYGPIESTIYPISGSSLDWAYDLGIKHTFAFELRDKGKFGFLLPESRIKPTCRETMLAVKFIAKYILKHTS.

Residues 1–15 (MRLILPVGLIATTLA) form the signal peptide. A propeptide spans 16–109 (IAPVRFDREK…IEKQFDVKED (94 aa)) (activation peptide). One can recognise a Peptidase M14 domain in the interval 118–412 (KYNNWEKIVA…LAVKFIAKYI (295 aa)). 2 disulfides stabilise this stretch: cysteine 173–cysteine 186 and cysteine 245–cysteine 268. Positions 176 and 179 each coordinate Zn(2+). Position 304 (histidine 304) interacts with Zn(2+). The active-site Proton donor/acceptor is the glutamate 378.

This sequence belongs to the peptidase M14 family. Requires Zn(2+) as cofactor.

The protein localises to the cytoplasmic vesicle. It localises to the secretory vesicle. It catalyses the reaction Release of a C-terminal amino acid, but little or no action with -Asp, -Glu, -Arg, -Lys or -Pro.. This is Mast cell carboxypeptidase A (CPA3) from Homo sapiens (Human).